The following is a 472-amino-acid chain: Argininosuccinate lyase (472 aa).

Belongs to the lyase 1 family. Argininosuccinate lyase subfamily.

Its subcellular location is the cytoplasm. It carries out the reaction 2-(N(omega)-L-arginino)succinate = fumarate + L-arginine. It participates in amino-acid biosynthesis; L-arginine biosynthesis; L-arginine from L-ornithine and carbamoyl phosphate: step 3/3. This is Argininosuccinate lyase from Maricaulis maris (strain MCS10) (Caulobacter maris).